A 289-amino-acid polypeptide reads, in one-letter code: Bis(5'-nucleosyl)-tetraphosphatase, symmetrical (289 aa).

Belongs to the Ap4A hydrolase family.

The catalysed reaction is P(1),P(4)-bis(5'-adenosyl) tetraphosphate + H2O = 2 ADP + 2 H(+). In terms of biological role, hydrolyzes diadenosine 5',5'''-P1,P4-tetraphosphate to yield ADP. In Yersinia pseudotuberculosis serotype IB (strain PB1/+), this protein is Bis(5'-nucleosyl)-tetraphosphatase, symmetrical.